Reading from the N-terminus, the 319-residue chain is MGFNINIIGTGGTRPLHNRYLSSVLIEYNGDNFLFDCGEGTQMSLRKQKISWQKIKMICITHLHADHITGLLGIVMLMSQSGETRKEPLIIAGPVGIKNYTKTNIDILKIYKNYEIIYKEIIIDKTEKIIYEDKTKKIEYTRLKHSIECVGYLFIEKDKPGKFNTEKAEELNIPKGPIRKTLQDGKEILIDGKIIKPSEILGESKKGLKVAYITDTGYFKELIQQIKNFNLVIIESTFKNELKKEADKKLHLTAGGAANIVKQAKVLKTGLIHFSERYTLRKDLENLLKEAKLEYPDGEIFLTKDGMRLEANKNNFIIK.

Positions 62, 64, 66, 67, 145, 215, and 273 each coordinate Zn(2+). D66 acts as the Proton acceptor in catalysis.

Belongs to the RNase Z family. As to quaternary structure, homodimer. Zn(2+) is required as a cofactor.

The catalysed reaction is Endonucleolytic cleavage of RNA, removing extra 3' nucleotides from tRNA precursor, generating 3' termini of tRNAs. A 3'-hydroxy group is left at the tRNA terminus and a 5'-phosphoryl group is left at the trailer molecule.. Its function is as follows. Zinc phosphodiesterase, which displays some tRNA 3'-processing endonuclease activity. Probably involved in tRNA maturation, by removing a 3'-trailer from precursor tRNA. This is Ribonuclease Z from Borrelia garinii subsp. bavariensis (strain ATCC BAA-2496 / DSM 23469 / PBi) (Borreliella bavariensis).